A 391-amino-acid chain; its full sequence is Extracellular metalloproteinase 3 (391 aa).

Positions 1–9 (HNVVDYVAS) are excised as a propeptide. N173 carries an N-linked (GlcNAc...) asparagine glycan. Residue H192 participates in Zn(2+) binding. E193 is an active-site residue. Residue H196 participates in Zn(2+) binding. 2 N-linked (GlcNAc...) asparagine glycosylation sites follow: N243 and N385.

Belongs to the peptidase M36 family. Zn(2+) serves as cofactor.

It localises to the secreted. In terms of biological role, secreted metalloproteinase probably acting as a virulence factor. The chain is Extracellular metalloproteinase 3 (MEP3) from Trichophyton soudanense.